The primary structure comprises 396 residues: Argininosuccinate synthase (396 aa).

ATP is bound by residues 10 to 18 (AYSGGLDTS) and A37. L-citrulline contacts are provided by Y88 and S93. G118 serves as a coordination point for ATP. L-aspartate contacts are provided by T120, N124, and D125. An L-citrulline-binding site is contributed by N124. L-citrulline contacts are provided by R128, S176, S185, E261, and Y273.

This sequence belongs to the argininosuccinate synthase family. Type 1 subfamily. Homotetramer.

Its subcellular location is the cytoplasm. It catalyses the reaction L-citrulline + L-aspartate + ATP = 2-(N(omega)-L-arginino)succinate + AMP + diphosphate + H(+). Its pathway is amino-acid biosynthesis; L-arginine biosynthesis; L-arginine from L-ornithine and carbamoyl phosphate: step 2/3. The sequence is that of Argininosuccinate synthase from Nitratidesulfovibrio vulgaris (strain ATCC 29579 / DSM 644 / CCUG 34227 / NCIMB 8303 / VKM B-1760 / Hildenborough) (Desulfovibrio vulgaris).